The primary structure comprises 468 residues: H(+)/Cl(-) exchange transporter ClcA (468 aa).

Residues 1–32 (MIKRERIVKSVLAHVPKDAINQFVSRGSTPTS) lie on the Cytoplasmic side of the membrane. A helical membrane pass occupies residues 33–69 (FSVLFMAAIVGTLAGLVGTYFEIAVHFVSETRTEWLK). At 70 to 76 (SEIGSVL) the chain is on the periplasmic side. Residues 77–100 (PLWLAAILISGALAFIGYYLVNRF) traverse the membrane as a helical segment. The Selectivity filter part_1 motif lies at 106-110 (GSGIP). S107 contributes to the chloride binding site. Positions 109–116 (IPEIEGAM) form an intramembrane region, helical. The Cytoplasmic portion of the chain corresponds to 117 to 123 (DNIRSVR). Helical transmembrane passes span 124–141 (WWRV…ALGS) and 148–166 (EGPT…TDIF). The short motif at 146–150 (GREGP) is the Selectivity filter part_2 element. At 167–176 (RVKDDDTRHS) the chain is on the cytoplasmic side. Intramembrane regions (helical) lie at residues 177-189 (LLAS…LAAA) and 193-201 (PLAAIMFVV). The Cytoplasmic segment spans residues 202 to 214 (EEMRPQFRYSLIS). The helical transmembrane segment at 215–232 (IRAVIISAIMANIVFRAI) threads the bilayer. At 233–252 (NGQEAVITMPQYQSPELQSL) the chain is on the periplasmic side. The chain crosses the membrane as a helical span at residues 253–281 (WLFLLLGSLFGVFGVVFNKLITIAQDSFV). Residues 282–287 (ALHKND) lie on the Cytoplasmic side of the membrane. Residues 288 to 309 (RKRYLITGTILGGVFGLLLLYV) traverse the membrane as a helical segment. Residues 310–329 (PQLTGGGIGLIPDITNGNYS) are Periplasmic-facing. 2 helical membrane-spanning segments follow: residues 330 to 349 (ISIL…LCFG) and 355 to 376 (GIFA…ASAD). A Selectivity filter part_3 motif is present at residues 355-359 (GIFAP). 2 residues coordinate chloride: I356 and F357. At 377–386 (MLLPSLTIEP) the chain is on the periplasmic side. Residues 387 to 401 (GVFAIAGMGALFAAT) constitute an intramembrane region (helical). The segment at residues 402–404 (VRA) is an intramembrane region (note=Loop between two helices). Positions 405-416 (PITGILLVIEMT) form an intramembrane region, helical. An intramembrane region (note=Loop between two helices) is located at residues 417 to 421 (NNYYL). Residues 422–438 (ILPLIITSLGAVIVAQL) traverse the membrane as a helical segment. The Cytoplasmic segment spans residues 439-468 (LGGQPIYSQLLHRTLKNDKLRQQDLPENQA). Y445 contributes to the chloride binding site.

This sequence belongs to the chloride channel (TC 2.A.49) family. ClcA subfamily. In terms of assembly, homodimer.

Its subcellular location is the cell inner membrane. It catalyses the reaction 2 chloride(in) + H(+)(out) = 2 chloride(out) + H(+)(in). Functionally, proton-coupled chloride transporter. Functions as antiport system and exchanges two chloride ions for 1 proton. Probably acts as an electrical shunt for an outwardly-directed proton pump that is linked to amino acid decarboxylation, as part of the extreme acid resistance (XAR) response. This is H(+)/Cl(-) exchange transporter ClcA from Vibrio campbellii (strain ATCC BAA-1116).